Here is a 600-residue protein sequence, read N- to C-terminus: DNA ligase (600 aa).

Aspartate 258 is an ATP binding site. Residue lysine 260 is the N6-AMP-lysine intermediate of the active site. Arginine 265, arginine 280, glutamate 310, phenylalanine 350, arginine 427, and lysine 433 together coordinate ATP.

It belongs to the ATP-dependent DNA ligase family. Mg(2+) is required as a cofactor.

The enzyme catalyses ATP + (deoxyribonucleotide)n-3'-hydroxyl + 5'-phospho-(deoxyribonucleotide)m = (deoxyribonucleotide)n+m + AMP + diphosphate.. With respect to regulation, inhibited by PCNA123 and PCNA323. In terms of biological role, DNA ligase that seals nicks in double-stranded DNA during DNA replication, DNA recombination and DNA repair. The protein is DNA ligase of Sulfurisphaera tokodaii (strain DSM 16993 / JCM 10545 / NBRC 100140 / 7) (Sulfolobus tokodaii).